We begin with the raw amino-acid sequence, 190 residues long: GTP cyclohydrolase 1 (190 aa).

The Zn(2+) site is built by C75, H78, and C146.

Belongs to the GTP cyclohydrolase I family. As to quaternary structure, toroid-shaped homodecamer, composed of two pentamers of five dimers.

It catalyses the reaction GTP + H2O = 7,8-dihydroneopterin 3'-triphosphate + formate + H(+). It participates in cofactor biosynthesis; 7,8-dihydroneopterin triphosphate biosynthesis; 7,8-dihydroneopterin triphosphate from GTP: step 1/1. This is GTP cyclohydrolase 1 from Campylobacter jejuni subsp. doylei (strain ATCC BAA-1458 / RM4099 / 269.97).